The primary structure comprises 470 residues: Chromosomal replication initiator protein DnaA (470 aa).

The segment at 1-79 (MTDDTWGLLR…AVQRLAFKVA (79 aa)) is domain I, interacts with DnaA modulators. The segment at 79 to 128 (AANSPTRPVQPTMSEAIEEPAPLQTTVVDQLGNQEGNTSVKSPPEDLQAA) is domain II. Residues 129 to 350 (PLDPRFTFDS…GALTRLFAFA (222 aa)) form a domain III, AAA+ region region. The ATP site is built by glycine 173, glycine 175, lysine 176, and threonine 177. The segment at 351–470 (SLVGREIDMD…VEMLRRSLEA (120 aa)) is domain IV, binds dsDNA.

Belongs to the DnaA family. Oligomerizes as a right-handed, spiral filament on DNA at oriC.

It localises to the cytoplasm. Functionally, plays an essential role in the initiation and regulation of chromosomal replication. ATP-DnaA binds to the origin of replication (oriC) to initiate formation of the DNA replication initiation complex once per cell cycle. Binds the DnaA box (a 9 base pair repeat at the origin) and separates the double-stranded (ds)DNA. Forms a right-handed helical filament on oriC DNA; dsDNA binds to the exterior of the filament while single-stranded (ss)DNA is stabiized in the filament's interior. The ATP-DnaA-oriC complex binds and stabilizes one strand of the AT-rich DNA unwinding element (DUE), permitting loading of DNA polymerase. After initiation quickly degrades to an ADP-DnaA complex that is not apt for DNA replication. Binds acidic phospholipids. In Ruegeria sp. (strain TM1040) (Silicibacter sp.), this protein is Chromosomal replication initiator protein DnaA.